The primary structure comprises 223 residues: Cytidylate kinase (223 aa).

13–21 (GPSASGKGT) lines the ATP pocket.

This sequence belongs to the cytidylate kinase family. Type 1 subfamily.

The protein localises to the cytoplasm. The enzyme catalyses CMP + ATP = CDP + ADP. It catalyses the reaction dCMP + ATP = dCDP + ADP. In Nitrosomonas europaea (strain ATCC 19718 / CIP 103999 / KCTC 2705 / NBRC 14298), this protein is Cytidylate kinase.